Reading from the N-terminus, the 555-residue chain is Glucose-6-phosphate isomerase (555 aa).

D-glucose 6-phosphate is bound by residues glycine 169–serine 170, serine 219–threonine 224, glutamine 364, glutamate 368, histidine 399, and lysine 521. Catalysis depends on glutamate 368, which acts as the Proton donor. Residues histidine 399 and lysine 521 contribute to the active site.

This sequence belongs to the GPI family. As to quaternary structure, homodimer.

The protein localises to the cytoplasm. It localises to the cytosol. It catalyses the reaction alpha-D-glucose 6-phosphate = beta-D-fructose 6-phosphate. Its pathway is carbohydrate degradation; glycolysis; D-glyceraldehyde 3-phosphate and glycerone phosphate from D-glucose: step 2/4. In terms of biological role, in the cytoplasm, catalyzes the conversion of glucose-6-phosphate to fructose-6-phosphate, the second step in glycolysis, and the reverse reaction during gluconeogenesis. This chain is Glucose-6-phosphate isomerase (RAG2), found in Kluyveromyces lactis (strain ATCC 8585 / CBS 2359 / DSM 70799 / NBRC 1267 / NRRL Y-1140 / WM37) (Yeast).